The sequence spans 147 residues: Transthyretin (147 aa).

The N-terminal stretch at 1 to 20 is a signal peptide; the sequence is MASHRLLLLCLAGLVFVSEA. Position 30 is a sulfocysteine (cysteine 30). Residue lysine 35 participates in L-thyroxine binding. Glutamate 62 bears the 4-carboxyglutamate; in a patient with Moyamoya disease mark. Serine 72 is modified (phosphoserine). Glutamate 74 is an L-thyroxine binding site. Asparagine 118 carries an N-linked (GlcNAc...) asparagine glycan. Serine 137 contacts L-thyroxine.

This sequence belongs to the transthyretin family. In terms of assembly, homotetramer. Dimer of dimers. In the homotetramer, subunits assemble around a central channel that can accommodate two ligand molecules. Interacts with RBP4. In terms of processing, not glycosylated under normal conditions. Following unfolding, caused for example by variant AMYLD1 'Gly-38', the cryptic Asn-118 site is exposed and glycosylated by STT3B-containing OST complex, leading to its degradation by the ER-associated degradation (ERAD) pathway. Sulfonation of the reactive cysteine Cys-30 enhances the stability of the native conformation of TTR, avoiding misassembly of the protein leading to amyloid formation. In terms of tissue distribution, detected in serum and cerebrospinal fluid (at protein level). Highly expressed in choroid plexus epithelial cells. Detected in retina pigment epithelium and liver.

It is found in the secreted. The protein localises to the cytoplasm. Its function is as follows. Thyroid hormone-binding protein. Probably transports thyroxine from the bloodstream to the brain. The polypeptide is Transthyretin (TTR) (Homo sapiens (Human)).